Here is a 163-residue protein sequence, read N- to C-terminus: Nucleotide-binding protein YajQ (163 aa).

The protein belongs to the YajQ family.

Nucleotide-binding protein. The chain is Nucleotide-binding protein YajQ from Salmonella typhi.